The sequence spans 278 residues: Embryonic polyadenylate-binding protein 2 (278 aa).

2 disordered regions span residues 21–66 (VSSD…GDAG) and 101–128 (EGTPRPPGVQQQAEEEEGTAAGQLLSPE). Basic and acidic residues predominate over residues 35–50 (ETKEILGPEGGEGKEE). A compositionally biased stretch (acidic residues) spans 51–63 (KEEEEDAEEDQDG). An RRM domain is found at 147-224 (RSVYVGNVDY…RVIKVLPKRT (78 aa)). Residues 227–278 (PGISSTDRGGLRGHPGSRGAPFPHSGLQGRPRLRPQGQNRARGKFSPWFSPY) form a disordered region.

Expressed in various adult tissues.

Its subcellular location is the cytoplasm. Functionally, binds the poly(A) tail of mRNA. The chain is Embryonic polyadenylate-binding protein 2 (PABPN1L) from Homo sapiens (Human).